We begin with the raw amino-acid sequence, 254 residues long: 4-hydroxy-tetrahydrodipicolinate reductase (254 aa).

7 to 12 (GASGRI) lines the NAD(+) pocket. An NADP(+)-binding site is contributed by R35. Residues 91 to 93 (GTT) and 115 to 118 (AHNM) each bind NAD(+). H147 serves as the catalytic Proton donor/acceptor. Residue H148 coordinates (S)-2,3,4,5-tetrahydrodipicolinate. K151 functions as the Proton donor in the catalytic mechanism. 157 to 158 (GT) contacts (S)-2,3,4,5-tetrahydrodipicolinate.

Belongs to the DapB family.

It is found in the cytoplasm. The enzyme catalyses (S)-2,3,4,5-tetrahydrodipicolinate + NAD(+) + H2O = (2S,4S)-4-hydroxy-2,3,4,5-tetrahydrodipicolinate + NADH + H(+). The catalysed reaction is (S)-2,3,4,5-tetrahydrodipicolinate + NADP(+) + H2O = (2S,4S)-4-hydroxy-2,3,4,5-tetrahydrodipicolinate + NADPH + H(+). The protein operates within amino-acid biosynthesis; L-lysine biosynthesis via DAP pathway; (S)-tetrahydrodipicolinate from L-aspartate: step 4/4. Catalyzes the conversion of 4-hydroxy-tetrahydrodipicolinate (HTPA) to tetrahydrodipicolinate. This Helicobacter pylori (strain P12) protein is 4-hydroxy-tetrahydrodipicolinate reductase.